Here is a 1117-residue protein sequence, read N- to C-terminus: DNA-directed RNA polymerase subunit beta (1117 aa).

The segment at 1094 to 1117 is disordered; that stretch reads QLARRTPPRPTYESLSRESLDDDE. Over residues 1108–1117 the composition is skewed to basic and acidic residues; the sequence is LSRESLDDDE.

Belongs to the RNA polymerase beta chain family. In terms of assembly, in cyanobacteria the RNAP catalytic core is composed of 2 alpha, 1 beta, 1 beta', 1 gamma and 1 omega subunit. When a sigma factor is associated with the core the holoenzyme is formed, which can initiate transcription.

The catalysed reaction is RNA(n) + a ribonucleoside 5'-triphosphate = RNA(n+1) + diphosphate. Its function is as follows. DNA-dependent RNA polymerase catalyzes the transcription of DNA into RNA using the four ribonucleoside triphosphates as substrates. The protein is DNA-directed RNA polymerase subunit beta of Trichormus variabilis (strain ATCC 29413 / PCC 7937) (Anabaena variabilis).